We begin with the raw amino-acid sequence, 109 residues long: Nucleoid-associated protein Plut_1285 (109 aa).

It belongs to the YbaB/EbfC family. In terms of assembly, homodimer.

Its subcellular location is the cytoplasm. It localises to the nucleoid. Its function is as follows. Binds to DNA and alters its conformation. May be involved in regulation of gene expression, nucleoid organization and DNA protection. This is Nucleoid-associated protein Plut_1285 from Chlorobium luteolum (strain DSM 273 / BCRC 81028 / 2530) (Pelodictyon luteolum).